The following is a 657-amino-acid chain: Protein PSK SIMULATOR 1 (657 aa).

Composition is skewed to polar residues over residues 1-15 (MGGL…NNAP), 26-39 (HLNN…SHSG), 62-76 (ESFS…SHPQ), and 540-556 (RSPN…SHNP). Disordered stretches follow at residues 1 to 80 (MGGL…NIED) and 534 to 559 (PVKS…PSMG). The N-myristoyl glycine moiety is linked to residue glycine 2.

The protein localises to the nucleus. Its function is as follows. Promotes seedling growth probably via the regulation of phytosulfokine (PSK) signaling; PSK are peptide phytohormones acting as growth factors. Together with PSI2 and PSI3, required during vegetative growth and reproduction. May also have a function in carbohydrate metabolism. The protein is Protein PSK SIMULATOR 1 of Arabidopsis thaliana (Mouse-ear cress).